The following is a 375-amino-acid chain: Dual-specificity RNA methyltransferase RlmN (375 aa).

Residue E94 is the Proton acceptor of the active site. In terms of domain architecture, Radical SAM core spans E100–D339. The cysteines at positions 107 and 344 are disulfide-linked. Positions 114, 118, and 121 each coordinate [4Fe-4S] cluster. S-adenosyl-L-methionine contacts are provided by residues G168–E169, S200, S222–H224, and N301. C344 serves as the catalytic S-methylcysteine intermediate.

Belongs to the radical SAM superfamily. RlmN family. [4Fe-4S] cluster is required as a cofactor.

Its subcellular location is the cytoplasm. The enzyme catalyses adenosine(2503) in 23S rRNA + 2 reduced [2Fe-2S]-[ferredoxin] + 2 S-adenosyl-L-methionine = 2-methyladenosine(2503) in 23S rRNA + 5'-deoxyadenosine + L-methionine + 2 oxidized [2Fe-2S]-[ferredoxin] + S-adenosyl-L-homocysteine. It catalyses the reaction adenosine(37) in tRNA + 2 reduced [2Fe-2S]-[ferredoxin] + 2 S-adenosyl-L-methionine = 2-methyladenosine(37) in tRNA + 5'-deoxyadenosine + L-methionine + 2 oxidized [2Fe-2S]-[ferredoxin] + S-adenosyl-L-homocysteine. In terms of biological role, specifically methylates position 2 of adenine 2503 in 23S rRNA and position 2 of adenine 37 in tRNAs. m2A2503 modification seems to play a crucial role in the proofreading step occurring at the peptidyl transferase center and thus would serve to optimize ribosomal fidelity. This chain is Dual-specificity RNA methyltransferase RlmN, found in Vibrio campbellii (strain ATCC BAA-1116).